Reading from the N-terminus, the 274-residue chain is 2,3,4,5-tetrahydropyridine-2,6-dicarboxylate N-succinyltransferase (274 aa).

This sequence belongs to the transferase hexapeptide repeat family.

It localises to the cytoplasm. It carries out the reaction (S)-2,3,4,5-tetrahydrodipicolinate + succinyl-CoA + H2O = (S)-2-succinylamino-6-oxoheptanedioate + CoA. The protein operates within amino-acid biosynthesis; L-lysine biosynthesis via DAP pathway; LL-2,6-diaminopimelate from (S)-tetrahydrodipicolinate (succinylase route): step 1/3. This chain is 2,3,4,5-tetrahydropyridine-2,6-dicarboxylate N-succinyltransferase, found in Leptothrix cholodnii (strain ATCC 51168 / LMG 8142 / SP-6) (Leptothrix discophora (strain SP-6)).